The chain runs to 150 residues: Large ribosomal subunit protein bL9 (150 aa).

This sequence belongs to the bacterial ribosomal protein bL9 family.

Its function is as follows. Binds to the 23S rRNA. The polypeptide is Large ribosomal subunit protein bL9 (Erwinia tasmaniensis (strain DSM 17950 / CFBP 7177 / CIP 109463 / NCPPB 4357 / Et1/99)).